A 542-amino-acid polypeptide reads, in one-letter code: Probable spastin homolog spas-1 (542 aa).

Positions 29 to 66 form a coiled coil; the sequence is RAAIEMDELTKQNGTINEKLQTAELYKQARQMLKEANE. Positions 131 to 177 are disordered; the sequence is ATVPGDKKVSKVKQTEKAPHVCSRGDRCGAHQPPPEKKSTPLKPVNQ. A compositionally biased stretch (basic and acidic residues) spans 135 to 169; it reads GDKKVSKVKQTEKAPHVCSRGDRCGAHQPPPEKKS. An ATP-binding site is contributed by 309-316; that stretch reads GPPGNGKT.

Belongs to the AAA ATPase family. Spastin subfamily. As to quaternary structure, homohexamer. The homohexamer is stabilized by ATP-binding. The homohexamer may adopt a ring conformation through which microtubules pass prior to being severed. Interacts with microtubules.

The protein localises to the cytoplasm. The protein resides in the cytoskeleton. Its subcellular location is the perinuclear region. It catalyses the reaction n ATP + n H2O + a microtubule = n ADP + n phosphate + (n+1) alpha/beta tubulin heterodimers.. Severs microtubules, probably in an ATP-dependent fashion. This is Probable spastin homolog spas-1 (spas-1) from Caenorhabditis briggsae.